We begin with the raw amino-acid sequence, 332 residues long: Glycerol-3-phosphate dehydrogenase [NAD(P)+] (332 aa).

Residues serine 11, phenylalanine 12, lysine 32, and lysine 106 each contribute to the NADPH site. Sn-glycerol 3-phosphate is bound by residues lysine 106, glycine 137, and serine 139. Residue alanine 141 participates in NADPH binding. Lysine 192, aspartate 245, serine 255, arginine 256, and asparagine 257 together coordinate sn-glycerol 3-phosphate. The active-site Proton acceptor is lysine 192. Residue arginine 256 coordinates NADPH. The NADPH site is built by valine 280 and glutamate 282.

The protein belongs to the NAD-dependent glycerol-3-phosphate dehydrogenase family.

Its subcellular location is the cytoplasm. The catalysed reaction is sn-glycerol 3-phosphate + NAD(+) = dihydroxyacetone phosphate + NADH + H(+). It carries out the reaction sn-glycerol 3-phosphate + NADP(+) = dihydroxyacetone phosphate + NADPH + H(+). Its pathway is membrane lipid metabolism; glycerophospholipid metabolism. In terms of biological role, catalyzes the reduction of the glycolytic intermediate dihydroxyacetone phosphate (DHAP) to sn-glycerol 3-phosphate (G3P), the key precursor for phospholipid synthesis. This is Glycerol-3-phosphate dehydrogenase [NAD(P)+] from Staphylococcus aureus (strain Mu3 / ATCC 700698).